The primary structure comprises 505 residues: Cyclin-dependent kinase C-1 (505 aa).

The Protein kinase domain maps to 26–325; sequence FEKLEQIGEG…AKDALDAEYF (300 aa). ATP contacts are provided by residues 32 to 40 and Lys55; that span reads IGEGTYGQV. Phosphotyrosine is present on Tyr37. Asp164 functions as the Proton acceptor in the catalytic mechanism. Phosphothreonine is present on Thr198. The segment at 336-505 is disordered; the sequence is SLPTYESSHE…QRNQQYGWQQ (170 aa). The span at 429 to 456 shows a compositional bias: low complexity; that stretch reads PPSGNQSGGYNQSRGGYSSGSYPPQGRG. The segment covering 482–491 has biased composition (gly residues); sequence GQYGGSGSSG. Residues 492–505 are compositionally biased toward low complexity; it reads RGQNQRNQQYGWQQ.

The protein belongs to the protein kinase superfamily. CMGC Ser/Thr protein kinase family. CDC2/CDKX subfamily. In terms of assembly, interacts with CYCT1-3. Highly expressed in flowers. Expressed in seedlings, roots, rosettes and stems.

It carries out the reaction L-seryl-[protein] + ATP = O-phospho-L-seryl-[protein] + ADP + H(+). It catalyses the reaction L-threonyl-[protein] + ATP = O-phospho-L-threonyl-[protein] + ADP + H(+). The catalysed reaction is [DNA-directed RNA polymerase] + ATP = phospho-[DNA-directed RNA polymerase] + ADP + H(+). This chain is Cyclin-dependent kinase C-1 (CDKC-1), found in Arabidopsis thaliana (Mouse-ear cress).